We begin with the raw amino-acid sequence, 693 residues long: Polyribonucleotide nucleotidyltransferase (693 aa).

Positions 489 and 495 each coordinate Mg(2+). The 60-residue stretch at 556–615 (PQIHVMNINPAKIKDVVGRGGATVKGIVEKTGAQIDTSDSGEVKVFAKDKKSMDMAVAMI) folds into the KH domain. In terms of domain architecture, S1 motif spans 625–693 (GQVYKGKIVK…GRVKLSLVAR (69 aa)).

Belongs to the polyribonucleotide nucleotidyltransferase family. As to quaternary structure, component of the RNA degradosome, which is a multiprotein complex involved in RNA processing and mRNA degradation. Requires Mg(2+) as cofactor.

Its subcellular location is the cytoplasm. It carries out the reaction RNA(n+1) + phosphate = RNA(n) + a ribonucleoside 5'-diphosphate. Functionally, involved in mRNA degradation. Catalyzes the phosphorolysis of single-stranded polyribonucleotides processively in the 3'- to 5'-direction. In Francisella tularensis subsp. tularensis (strain FSC 198), this protein is Polyribonucleotide nucleotidyltransferase.